A 673-amino-acid chain; its full sequence is Pesticin receptor (673 aa).

Residues 1–22 (MKMTRLYPLALGGLLLPAIANA) form the signal peptide. The short motif at 30–37 (STLEVTAS) is the TonB box element. One can recognise a TBDR plug domain in the interval 41–155 (SRSASANNVS…QGGIINIVTQ (115 aa)). One can recognise a TBDR beta-barrel domain in the interval 160-672 (TPRGYIEGGV…TVGINTRIDF (513 aa)). The TonB C-terminal box motif lies at 657 to 673 (QVNMGRTVGINTRIDFF).

The protein belongs to the TonB-dependent receptor family.

It localises to the cell outer membrane. Its function is as follows. Receptor for the bacteriocin pesticin and for the siderophore yersiniabactin. This is Pesticin receptor (fyuA) from Yersinia enterocolitica.